A 362-amino-acid chain; its full sequence is Putative integrase ORF3 (362 aa).

The 181-residue stretch at 179–359 folds into the Integrase catalytic domain; that stretch reads YEVKEIGLLQ…TPFNFLNSLS (181 aa). The Mg(2+) site is built by D190 and D256.

This sequence belongs to the plectrovirus integrase ORF3 family.

This protein may encode an integrase, which is necessary for integration of the viral DNA into host genome. The chain is Putative integrase ORF3 from Spiroplasma melliferum (SpV1).